Consider the following 95-residue polypeptide: Aspartyl/glutamyl-tRNA(Asn/Gln) amidotransferase subunit C (95 aa).

The protein belongs to the GatC family. In terms of assembly, heterotrimer of A, B and C subunits.

The enzyme catalyses L-glutamyl-tRNA(Gln) + L-glutamine + ATP + H2O = L-glutaminyl-tRNA(Gln) + L-glutamate + ADP + phosphate + H(+). The catalysed reaction is L-aspartyl-tRNA(Asn) + L-glutamine + ATP + H2O = L-asparaginyl-tRNA(Asn) + L-glutamate + ADP + phosphate + 2 H(+). In terms of biological role, allows the formation of correctly charged Asn-tRNA(Asn) or Gln-tRNA(Gln) through the transamidation of misacylated Asp-tRNA(Asn) or Glu-tRNA(Gln) in organisms which lack either or both of asparaginyl-tRNA or glutaminyl-tRNA synthetases. The reaction takes place in the presence of glutamine and ATP through an activated phospho-Asp-tRNA(Asn) or phospho-Glu-tRNA(Gln). The protein is Aspartyl/glutamyl-tRNA(Asn/Gln) amidotransferase subunit C of Campylobacter curvus (strain 525.92).